Reading from the N-terminus, the 152-residue chain is Proline-rich acidic protein 1 (152 aa).

Residues 1–20 (MKRFLLATCLVAVLLWEAGA) form the signal peptide.

Interacts with MTTP. Interacts with MAD1L1. As to expression, highly expressed in the small intestine where it shows a proximal-distal graded expression.

Its subcellular location is the secreted. The protein resides in the endoplasmic reticulum. Functionally, lipid-binding protein which promotes lipid absorption by facilitating MTTP-mediated lipid transfer (mainly triglycerides and phospholipids) and MTTP-mediated apoB lipoprotein assembly and secretion. Protects the gastrointestinal epithelium from irradiation-induced apoptosis. May play an important role in maintaining normal growth homeostasis in epithelial cells. Involved in p53/TP53-dependent cell survival after DNA damage. In Rattus norvegicus (Rat), this protein is Proline-rich acidic protein 1 (Prap1).